The primary structure comprises 178 residues: Disulfide bond formation protein B (178 aa).

Topologically, residues 1–16 are cytoplasmic; it reads MTIFSSLNQFSKGHVS. A helical membrane pass occupies residues 17-33; it reads WLLLLLFIIFFEACALY. The Periplasmic segment spans residues 34–51; it reads FQHVMMLAPCVMCIYERV. A disulfide bridge links Cys-43 with Cys-46. The helical transmembrane segment at 52 to 67 threads the bilayer; the sequence is AMMGIGGAAIIGLIAP. The Cytoplasmic segment spans residues 68–74; it reads NNALFRW. A helical membrane pass occupies residues 75 to 92; it reads LGLIGWGLSSYKGLMLAM. Topologically, residues 93-147 are periplasmic; the sequence is QHVDYQFNPSPFATCDLFVTFPSWAPLNQWVPWMFEAYGDCSKIVWQFFDLSMPQ. Cys-107 and Cys-133 are disulfide-bonded. A helical transmembrane segment spans residues 148-166; that stretch reads WLVVIFAGNLVALALIVIA. The Cytoplasmic portion of the chain corresponds to 167-178; it reads QFFPVKRKNPIR.

This sequence belongs to the DsbB family.

The protein localises to the cell inner membrane. Its function is as follows. Required for disulfide bond formation in some periplasmic proteins. Acts by oxidizing the DsbA protein. This is Disulfide bond formation protein B from Vibrio parahaemolyticus serotype O3:K6 (strain RIMD 2210633).